The following is a 513-amino-acid chain: MQLNPSEISELLKSRIEGLGASADIRTQGTVVSVTDGITRIHGLSDVMQGEMLEFPNNVFGVALNLERDSVGAVILGDYTGVSEGDQVKTTGRILEVPVGPELKGRVVNTLGVPIDGKGPIDTKETDIIEKVAPGVIARRSVSQPLQTGIKAIDSMVPIGRGQRELIIGDRQTGKTAVAVDTIISQKGKGVTCVYVAIGQKASTINNVVRKLEEHGAMEYTIVVAASASDSAAMQYLAAYAGCTMGEYFRDRGEDALIIYDDLTKQAWAYRQVSLLLRRPPGREAYPGDVFYLHSRLLERAARVNEEYVEKFTNGAVKGKTGSLTALPIIETQAGDVSAFVPTNVISITDGQIFLETDLFNAGVRPAINAGISVSRVGGAAQTKVIKKLSGGIRTDLAQYRELAAFAQFASDLDDATRRQLERGKRVVELLKQPQYQPLQVWELAVTLYTVNNGYLDDVDVAQVLAFEKSLKDQLKAKHAALIQRIEDTKELSKDDEAELAAAIQDFKKHGAF.

169–176 (GDRQTGKT) serves as a coordination point for ATP.

The protein belongs to the ATPase alpha/beta chains family. F-type ATPases have 2 components, CF(1) - the catalytic core - and CF(0) - the membrane proton channel. CF(1) has five subunits: alpha(3), beta(3), gamma(1), delta(1), epsilon(1). CF(0) has three main subunits: a(1), b(2) and c(9-12). The alpha and beta chains form an alternating ring which encloses part of the gamma chain. CF(1) is attached to CF(0) by a central stalk formed by the gamma and epsilon chains, while a peripheral stalk is formed by the delta and b chains.

The protein localises to the cell inner membrane. It catalyses the reaction ATP + H2O + 4 H(+)(in) = ADP + phosphate + 5 H(+)(out). In terms of biological role, produces ATP from ADP in the presence of a proton gradient across the membrane. The alpha chain is a regulatory subunit. The chain is ATP synthase subunit alpha from Bordetella petrii (strain ATCC BAA-461 / DSM 12804 / CCUG 43448).